We begin with the raw amino-acid sequence, 351 residues long: Protein RecA (351 aa).

68–75 (GPESSGKT) is a binding site for ATP.

Belongs to the RecA family.

The protein localises to the cytoplasm. Can catalyze the hydrolysis of ATP in the presence of single-stranded DNA, the ATP-dependent uptake of single-stranded DNA by duplex DNA, and the ATP-dependent hybridization of homologous single-stranded DNAs. It interacts with LexA causing its activation and leading to its autocatalytic cleavage. The chain is Protein RecA from Chloroflexus aggregans (strain MD-66 / DSM 9485).